The sequence spans 957 residues: MTQTLSQLENRGAFIERHIGPDAAQQQEMLNAVGAESLNALTGQIVPKDIQLATPPQVGEAATEYAALAELKAIAGRNKRFTSYIGMGYTAVQLPPVILRNMLENPGWYTAYTPYQPEVSQGRLEALLNFQQITLDLTGLDMASASLLDEATAAAEAMAMAKRVSKLKNANRFFVASDVHPQTLDVVRTRAETFGFDVIVDDAAKALDHQDVFGVLLQQVGTTGEIHDYGALISELKARKVIVSVAADFMALVLLTAPGKQGADIVFGSAQRFGVPMGYGGPHAAFFAAKDEFKRSMPGRIIGVSKDAAGNTALRMAMQTREQHIRREKANSNICTSQVLLANIASLYAVYHGPVGLKRIANRIHRLTDILAAGLQQKGLKLRHAHYFDTLCVEVADKAAVLARAEAAEINLRSDIHNAVGITLDETTTRENVAQLFNVLLGDSHGLNIETLDKDVALDSRSIQQSMLRDDAILTHPVFNRYHSETEMMRYMHSLERKDLALNQAMIPLGSCTMKLNAAAEMIPITWPEFAELHPFCPPEQAEGYHQMISQLSDWLVKLTGYDAVCMQPNSGAQGEYAGLLAIRHYHESRNEGHRDICLIPASAHGTNPASAHMAGMQVVVVACDKNGNIDLDDLRAKAEQHAANLSCIMVTYPSTHGVYEETIREVCEVVHQFGGQVYLDGANMNAQVGITSPGFIGADVSHLNLHKTFCIPHGGGGPGMGPIGVKAHLAPFVPGHSVVQIEGMLTRQGAVSAAPFGSASILPISWMYIRMMGAEGLKQASQVAILNANYIASRLKDAYPVLYTGRDGRVAHECILDIRPLKEETGISELDIAKRLIDYGFHAPTMSFPVAGTLMVEPTESEGKAELDRFIDAMLAIRAEIDQVKAGVWPLEDNPLVNAPHIQSELVAEWAHPYSREVAVFPAGVADKYWPTVKRLDDVYGDRNLFCSCVPISDYQ.

Lysine 708 bears the N6-(pyridoxal phosphate)lysine mark.

This sequence belongs to the GcvP family. In terms of assembly, the glycine cleavage system is composed of four proteins: P, T, L and H. It depends on pyridoxal 5'-phosphate as a cofactor.

It carries out the reaction N(6)-[(R)-lipoyl]-L-lysyl-[glycine-cleavage complex H protein] + glycine + H(+) = N(6)-[(R)-S(8)-aminomethyldihydrolipoyl]-L-lysyl-[glycine-cleavage complex H protein] + CO2. The glycine cleavage system catalyzes the degradation of glycine. The P protein binds the alpha-amino group of glycine through its pyridoxal phosphate cofactor; CO(2) is released and the remaining methylamine moiety is then transferred to the lipoamide cofactor of the H protein. In Salmonella paratyphi B (strain ATCC BAA-1250 / SPB7), this protein is Glycine dehydrogenase (decarboxylating).